The sequence spans 89 residues: DNA/RNA-binding protein Alba (89 aa).

N6-acetyllysine is present on lysine 11.

Belongs to the histone-like Alba family. Acetylated. Acetylation at Lys-11 decreases DNA-binding affinity.

It localises to the cytoplasm. Its subcellular location is the chromosome. Functionally, binds double-stranded DNA tightly but without sequence specificity. Involved in DNA compaction. This is DNA/RNA-binding protein Alba from Thermoplasma volcanium (strain ATCC 51530 / DSM 4299 / JCM 9571 / NBRC 15438 / GSS1).